The primary structure comprises 128 residues: Cystatin-2 (128 aa).

The signal sequence occupies residues 1-19; that stretch reads MSSFKVAVLLIAVYGASQG. Positions 29–116 constitute a Cystatin domain; sequence QDPTEARFLE…CVAVIYHVPW (88 aa). 2 cysteine pairs are disulfide-bonded: Cys-84/Cys-96 and Cys-107/Cys-127.

The protein belongs to the cystatin family. As to expression, widely expressed. Detected in salivary glands (at protein level), gut (at protein level), ovaries, and Malpighian tubules.

The protein localises to the secreted. In terms of biological role, inhibitor of cysteine proteinases with broad specificity for mammalian cathepsins, including endopeptidases (cathepsins L and S) and exopeptidases (cathepsins B, C and H). Also inhibits endogenous cathepsin B-like and cathepsin C-like proteinases. Does not inhibit human legumain. May mimic specific host-derived cystatin(s) to interfere with its/their function in controlling cathepsin-mediated proteolysis. Affects the function of antigen-presenting mouse dendritic cells by reducing the production of the pro-inflammatory cytokines TNF and interleukin-12, and proliferation of antigen-specific CD4+ T-cells, suggesting it may suppress the host adaptive immune response. It is noteworthy that immunization of mice with this protein reduces O.moubata survival in infestation experiments. This chain is Cystatin-2, found in Ornithodoros moubata (Soft tick).